The following is a 283-amino-acid chain: Protein FDD123 (283 aa).

A run of 7 helical transmembrane segments spans residues 24–44, 52–72, 97–117, 122–142, 148–168, 185–205, and 217–237; these read WLWA…AWTF, LFHQ…FSMA, YIQW…ATGL, IFTT…AALV, WGYY…LLWH, ILAA…WACA, and MIWY…FFLW.

Belongs to the archaeal/bacterial/fungal opsin family.

It localises to the membrane. In Trametes versicolor (White-rot fungus), this protein is Protein FDD123 (FDD123).